The chain runs to 530 residues: Feruloyl esterase C (530 aa).

Positions 1–25 (MMLTSAILLLTLGVQLSHADDSSRE) are cleaved as a signal peptide. Disulfide bonds link Cys-31/Cys-78, Cys-66/Cys-117, Cys-190/Cys-444, Cys-259/Cys-276, Cys-285/Cys-294, and Cys-506/Cys-528. Residue Ser-191 is the Acyl-ester intermediate of the active site. Residues Asp-260, Asp-263, Ala-265, Asp-267, and Val-269 each coordinate Ca(2+). Active-site charge relay system residues include Asp-403 and His-443.

Belongs to the tannase family.

The protein resides in the secreted. The catalysed reaction is feruloyl-polysaccharide + H2O = ferulate + polysaccharide.. Functionally, involved in degradation of plant cell walls. Hydrolyzes the feruloyl-arabinose ester bond in arabinoxylans as well as the feruloyl-galactose and feruloyl-arabinose ester bonds in pectin. Active against methyl esters of sinapate (MSA) and caffeate (MCA). This Talaromyces stipitatus (strain ATCC 10500 / CBS 375.48 / QM 6759 / NRRL 1006) (Penicillium stipitatum) protein is Feruloyl esterase C (faeC).